Consider the following 375-residue polypeptide: Queuine tRNA-ribosyltransferase (375 aa).

Asp-89 serves as the catalytic Proton acceptor. Residues Asp-89–Phe-93, Asp-143, Gln-187, and Gly-214 contribute to the substrate site. Residues Gly-245–Asp-251 are RNA binding. Asp-264 serves as the catalytic Nucleophile. Positions Thr-269–Arg-273 are RNA binding; important for wobble base 34 recognition. Residues Cys-302, Cys-304, Cys-307, and His-333 each contribute to the Zn(2+) site.

This sequence belongs to the queuine tRNA-ribosyltransferase family. As to quaternary structure, homodimer. Within each dimer, one monomer is responsible for RNA recognition and catalysis, while the other monomer binds to the replacement base PreQ1. Requires Zn(2+) as cofactor.

The catalysed reaction is 7-aminomethyl-7-carbaguanine + guanosine(34) in tRNA = 7-aminomethyl-7-carbaguanosine(34) in tRNA + guanine. It functions in the pathway tRNA modification; tRNA-queuosine biosynthesis. Its function is as follows. Catalyzes the base-exchange of a guanine (G) residue with the queuine precursor 7-aminomethyl-7-deazaguanine (PreQ1) at position 34 (anticodon wobble position) in tRNAs with GU(N) anticodons (tRNA-Asp, -Asn, -His and -Tyr). Catalysis occurs through a double-displacement mechanism. The nucleophile active site attacks the C1' of nucleotide 34 to detach the guanine base from the RNA, forming a covalent enzyme-RNA intermediate. The proton acceptor active site deprotonates the incoming PreQ1, allowing a nucleophilic attack on the C1' of the ribose to form the product. After dissociation, two additional enzymatic reactions on the tRNA convert PreQ1 to queuine (Q), resulting in the hypermodified nucleoside queuosine (7-(((4,5-cis-dihydroxy-2-cyclopenten-1-yl)amino)methyl)-7-deazaguanosine). This chain is Queuine tRNA-ribosyltransferase, found in Salmonella typhi.